The primary structure comprises 652 residues: Type III restriction-modification enzyme StyLTI Mod subunit (652 aa).

The segment at 135 to 138 (DPPY) is binding of S-adenosyl methionine.

The protein belongs to the N(4)/N(6)-methyltransferase family. In terms of assembly, homodimer, also forms a functional restriction-competent complex with Res.

It carries out the reaction a 2'-deoxyadenosine in DNA + S-adenosyl-L-methionine = an N(6)-methyl-2'-deoxyadenosine in DNA + S-adenosyl-L-homocysteine + H(+). Its function is as follows. A beta subtype methylase that binds the system-specific DNA recognition site 5'-CAGAG-3' and methylates A-4 (of only 1 strand as the other does not have an A residue). DNA restriction requires both the Res and Mod subunits. This Salmonella typhimurium (strain LT2 / SGSC1412 / ATCC 700720) protein is Type III restriction-modification enzyme StyLTI Mod subunit.